The primary structure comprises 488 residues: Catalase (488 aa).

A disordered region spans residues M1–A24. Polar residues predominate over residues L7–T23. Residues H55 and N128 contribute to the active site. Y338 lines the heme pocket.

The protein belongs to the catalase family. It depends on heme as a cofactor.

Its subcellular location is the cytoplasm. It carries out the reaction 2 H2O2 = O2 + 2 H2O. Its function is as follows. Decomposes hydrogen peroxide into water and oxygen; serves to protect cells from the toxic effects of hydrogen peroxide. The chain is Catalase (kat) from Listeria innocua serovar 6a (strain ATCC BAA-680 / CLIP 11262).